The following is a 734-amino-acid chain: Amino-acid acetyltransferase, mitochondrial (734 aa).

A disordered region spans residues 384–433 (YSETSSRSTRAEADSNFNLRDDIPLSSFTEQKSGELEYSPRHQNDSPTQQ). Basic and acidic residues-rich tracts occupy residues 392 to 406 (TRAEADSNFNLRDDI) and 415 to 427 (KSGELEYSPRHQN). One can recognise an N-acetyltransferase domain in the interval 555-724 (GVPQISLTDP…YEAVCKTIEP (170 aa)).

It belongs to the acetyltransferase family.

It is found in the mitochondrion. The enzyme catalyses L-glutamate + acetyl-CoA = N-acetyl-L-glutamate + CoA + H(+). It participates in amino-acid biosynthesis; L-arginine biosynthesis; N(2)-acetyl-L-ornithine from L-glutamate: step 1/4. N-acetylglutamate synthase involved in arginine biosynthesis. This chain is Amino-acid acetyltransferase, mitochondrial (arg2), found in Botryotinia fuckeliana (strain B05.10) (Noble rot fungus).